The sequence spans 58 residues: Arabinogalactan protein 21 (58 aa).

The first 24 residues, 1 to 24 (MEAMKMKMMVFIMVVAVAFSAATA), serve as a signal peptide directing secretion. Pro30, Pro32, and Pro34 each carry 4-hydroxyproline. Residues Pro30, Pro32, and Pro34 are each glycosylated (O-linked (Ara...) hydroxyproline). Ser36 carries GPI-anchor amidated serine lipidation. Residues 37-58 (DAAMFVPALFASVVALASGFIF) constitute a propeptide, removed in mature form.

The protein belongs to the AG-peptide AGP family. In terms of processing, contains 4-hydroxyproline; hydroxylated on Pro-30, Pro-32 and Pro-34. O-glycosylated on hydroxyprolines; noncontiguous hydroxylproline residues are glycosylated with arabinogalactan.

It localises to the cell membrane. Its function is as follows. Proteoglycan that seems to be implicated in diverse developmental roles such as differentiation, cell-cell recognition, embryogenesis and programmed cell death. The protein is Arabinogalactan protein 21 of Arabidopsis thaliana (Mouse-ear cress).